A 216-amino-acid polypeptide reads, in one-letter code: Adenylate kinase (216 aa).

ATP is bound at residue 10–15 (GAGKGT). Positions 30–59 (STGDMLRAAVKAGTELGIKAKSIMDAGGLV) are NMP. AMP-binding positions include Thr-31, Arg-36, 57–59 (GLV), 85–88 (GFPR), and Gln-92. An LID region spans residues 122–159 (GRRVHEASGRVYHIVYNPPKIAGKDDITGEELVQRKDD). Residues Arg-123 and 132-133 (VY) each bind ATP. AMP-binding residues include Arg-156 and Arg-167. Residue Gly-202 participates in ATP binding.

The protein belongs to the adenylate kinase family. In terms of assembly, monomer.

The protein localises to the cytoplasm. The enzyme catalyses AMP + ATP = 2 ADP. It functions in the pathway purine metabolism; AMP biosynthesis via salvage pathway; AMP from ADP: step 1/1. Its function is as follows. Catalyzes the reversible transfer of the terminal phosphate group between ATP and AMP. Plays an important role in cellular energy homeostasis and in adenine nucleotide metabolism. This is Adenylate kinase from Pseudomonas fluorescens (strain Pf0-1).